The sequence spans 444 residues: Sperm-associated antigen 4 protein (444 aa).

The segment at M1–P109 is disordered. Low complexity predominate over residues N19–S36. A run of 2 helical transmembrane segments spans residues F137–V159 and I166–L188. Residues L204 to E241 adopt a coiled-coil conformation. Positions G267–I428 constitute an SUN domain.

Self-associates. Interacts with ODF1. May associate with microtubules. Interacts with SUN3 and SYNE1; suggesting the formation of a LINC complexs; a SUN domain-based heterotrimer of SPAG4 and SUN3 may associate with SYNE1. Interacts with SEPT12 and LMNB1; during spermatogenesis. As to expression, testis specific. Exclusively expressed in spermatids.

It is found in the membrane. The protein localises to the cytoplasm. It localises to the cytoskeleton. Its subcellular location is the flagellum axoneme. The protein resides in the nucleus envelope. It is found in the nucleus inner membrane. In terms of biological role, involved in spermatogenesis. Required for sperm head formation but not required to establish and maintain general polarity of the sperm head. Required for anchoring and organization of the manchette. Required for targeting of SUN3 and probably SYNE1 through a probable SUN1:SYNE3 LINC complex to the nuclear envelope and involved in accurate posterior sperm head localization of the complex. May anchor SUN3 the nuclear envelope. Involved in maintenance of the nuclear envelope integrity. May assist the organization and assembly of outer dense fibers (ODFs), a specific structure of the sperm tail. The chain is Sperm-associated antigen 4 protein (Spag4) from Rattus norvegicus (Rat).